A 686-amino-acid polypeptide reads, in one-letter code: X-linked interleukin-1 receptor accessory protein-like 2 (686 aa).

Positions 1-16 are cleaved as a signal peptide; sequence MKLPLLLALVVCSAVS. The Extracellular segment spans residues 17 to 354; sequence TNLKMVSKRN…LLRKKDLIYK (338 aa). One can recognise an Ig-like C2-type 1 domain in the interval 32–132; that stretch reads IDWSVDLKTY…YCMKVSMSLT (101 aa). A disulfide bond links Cys53 and Cys116. N-linked (GlcNAc...) asparagine glycans are attached at residues Asn63, Asn120, Asn136, Asn211, and Asn328. 2 consecutive Ig-like C2-type domains span residues 141–232 and 239–347; these read CYNS…LKVT and PPKP…VLLR. Intrachain disulfides connect Cys162-Cys214 and Cys265-Cys331. The chain crosses the membrane as a helical span at residues 355–375; the sequence is IELAGGLGAIFLLLILLLVVY. Residues 376–686 lie on the Cytoplasmic side of the membrane; sequence KCYNIELMLF…KELSFTSDIW (311 aa). Positions 400–556 constitute a TIR domain; it reads KEYDAYLSYT…KFWKHLVYEM (157 aa). Residue Glu488 is part of the active site.

It belongs to the interleukin-1 receptor family. Detected in fetal brain after day 12.5, in particular in parts of the diencephalon and in the basal plate of the spinal cord. In postnatal brain detected in cerebral cortex, olfactory bulb, in the CA1 region of the hippocampus and in Purkinje cells of the Xth cerebellar lobule.

It is found in the membrane. The catalysed reaction is NAD(+) + H2O = ADP-D-ribose + nicotinamide + H(+). This chain is X-linked interleukin-1 receptor accessory protein-like 2 (Il1rapl2), found in Mus musculus (Mouse).